The primary structure comprises 99 residues: Plastocyanin (99 aa).

The region spanning 1 to 99 (IEILLGGDDG…AGMVGKVTVN (99 aa)) is the Plastocyanin-like domain. 4 residues coordinate Cu cation: H37, C84, H87, and M92.

Belongs to the plastocyanin family. Cu(2+) is required as a cofactor.

It localises to the plastid. The protein localises to the chloroplast thylakoid membrane. Functionally, participates in electron transfer between P700 and the cytochrome b6-f complex in photosystem I. The protein is Plastocyanin (PETE) of Cucumis sativus (Cucumber).